A 493-amino-acid chain; its full sequence is Glutamate--tRNA ligase (493 aa).

A 'HIGH' region motif is present at residues 10 to 20 (PSPTGTPHVGL). The 'KMSKS' region motif lies at 254-258 (KLSKR). ATP is bound at residue Lys-257.

This sequence belongs to the class-I aminoacyl-tRNA synthetase family. Glutamate--tRNA ligase type 1 subfamily. In terms of assembly, monomer.

It is found in the cytoplasm. The catalysed reaction is tRNA(Glu) + L-glutamate + ATP = L-glutamyl-tRNA(Glu) + AMP + diphosphate. Its function is as follows. Catalyzes the attachment of glutamate to tRNA(Glu) in a two-step reaction: glutamate is first activated by ATP to form Glu-AMP and then transferred to the acceptor end of tRNA(Glu). This Corynebacterium glutamicum (strain ATCC 13032 / DSM 20300 / JCM 1318 / BCRC 11384 / CCUG 27702 / LMG 3730 / NBRC 12168 / NCIMB 10025 / NRRL B-2784 / 534) protein is Glutamate--tRNA ligase.